A 306-amino-acid chain; its full sequence is Phosphoadenosine phosphosulfate reductase (306 aa).

Disordered stretches follow at residues 1–30 (MPAK…VSGG) and 245–266 (YHST…KGQA).

This sequence belongs to the PAPS reductase family. CysH subfamily.

The catalysed reaction is [thioredoxin]-disulfide + sulfite + adenosine 3',5'-bisphosphate + 2 H(+) = [thioredoxin]-dithiol + 3'-phosphoadenylyl sulfate. It participates in sulfur metabolism; hydrogen sulfide biosynthesis; sulfite from sulfate: step 3/3. Its function is as follows. The NADP dependent reduction of PAPS into sulfite involves thioredoxin which probably plays the role of a thiol carrier. The protein is Phosphoadenosine phosphosulfate reductase (sA) of Emericella nidulans (strain FGSC A4 / ATCC 38163 / CBS 112.46 / NRRL 194 / M139) (Aspergillus nidulans).